The sequence spans 347 residues: Dihydroorotase (347 aa).

Zn(2+)-binding residues include H17 and H19. Substrate is bound by residues 19 to 21 and N45; that span reads HVR. 3 residues coordinate Zn(2+): K102, H139, and H177. The residue at position 102 (K102) is an N6-carboxylysine. Substrate is bound at residue H139. L222 lines the substrate pocket. D250 contributes to the Zn(2+) binding site. D250 is a catalytic residue. H254 and A266 together coordinate substrate.

The protein belongs to the metallo-dependent hydrolases superfamily. DHOase family. Class II DHOase subfamily. As to quaternary structure, homodimer. Zn(2+) serves as cofactor.

It catalyses the reaction (S)-dihydroorotate + H2O = N-carbamoyl-L-aspartate + H(+). Its pathway is pyrimidine metabolism; UMP biosynthesis via de novo pathway; (S)-dihydroorotate from bicarbonate: step 3/3. Its function is as follows. Catalyzes the reversible cyclization of carbamoyl aspartate to dihydroorotate. The polypeptide is Dihydroorotase (Acidovorax sp. (strain JS42)).